The following is a 370-amino-acid chain: tRNA-specific 2-thiouridylase MnmA (370 aa).

ATP is bound by residues 14–21 and M40; that span reads GMSGGVDS. An interaction with target base in tRNA region spans residues 100 to 102; it reads NPD. C105 (nucleophile) is an active-site residue. A disulfide bridge links C105 with C205. G129 serves as a coordination point for ATP. The tract at residues 155-157 is interaction with tRNA; that stretch reads KDQ. C205 serves as the catalytic Cysteine persulfide intermediate. The tract at residues 321 to 322 is interaction with tRNA; it reads RY.

This sequence belongs to the MnmA/TRMU family.

It localises to the cytoplasm. The catalysed reaction is S-sulfanyl-L-cysteinyl-[protein] + uridine(34) in tRNA + AH2 + ATP = 2-thiouridine(34) in tRNA + L-cysteinyl-[protein] + A + AMP + diphosphate + H(+). Its function is as follows. Catalyzes the 2-thiolation of uridine at the wobble position (U34) of tRNA, leading to the formation of s(2)U34. This is tRNA-specific 2-thiouridylase MnmA from Bordetella avium (strain 197N).